A 236-amino-acid chain; its full sequence is 27 kDa hemolymph protein (236 aa).

A signal peptide spans 1–17; sequence MMWKLIIVTILAVGVLC.

Monomer. As to expression, hemolymph.

Its subcellular location is the secreted. This is 27 kDa hemolymph protein from Galleria mellonella (Greater wax moth).